The following is a 234-amino-acid chain: 2-C-methyl-D-erythritol 4-phosphate cytidylyltransferase (234 aa).

The protein belongs to the IspD/TarI cytidylyltransferase family. IspD subfamily.

It catalyses the reaction 2-C-methyl-D-erythritol 4-phosphate + CTP + H(+) = 4-CDP-2-C-methyl-D-erythritol + diphosphate. It participates in isoprenoid biosynthesis; isopentenyl diphosphate biosynthesis via DXP pathway; isopentenyl diphosphate from 1-deoxy-D-xylulose 5-phosphate: step 2/6. Functionally, catalyzes the formation of 4-diphosphocytidyl-2-C-methyl-D-erythritol from CTP and 2-C-methyl-D-erythritol 4-phosphate (MEP). This is 2-C-methyl-D-erythritol 4-phosphate cytidylyltransferase from Thermosynechococcus vestitus (strain NIES-2133 / IAM M-273 / BP-1).